The following is a 186-amino-acid chain: Threonylcarbamoyl-AMP synthase (186 aa).

The YrdC-like domain occupies 3–186 (ILSLSECVDR…IINGSLIRHG (184 aa)).

It belongs to the SUA5 family. TsaC subfamily.

The protein localises to the cytoplasm. It carries out the reaction L-threonine + hydrogencarbonate + ATP = L-threonylcarbamoyladenylate + diphosphate + H2O. Required for the formation of a threonylcarbamoyl group on adenosine at position 37 (t(6)A37) in tRNAs that read codons beginning with adenine. Catalyzes the conversion of L-threonine, HCO(3)(-)/CO(2) and ATP to give threonylcarbamoyl-AMP (TC-AMP) as the acyladenylate intermediate, with the release of diphosphate. This is Threonylcarbamoyl-AMP synthase from Buchnera aphidicola subsp. Baizongia pistaciae (strain Bp).